The chain runs to 254 residues: MSFVLLSKMAKLKFNHIRHTIISTQKSTTIMPGISQLLNNRLIGKEFSSAVPTMFKREDYKLTIHDIAFSKWRNLIRHNDWKDFNNRKERVRRYRHEDLPPQRCTGLYELGVGVIGQDQGQNFDPDNNVLGVYVGQCVDVKSRLQDYGRRGGHLPSGLYEDIFSEGYSVFYRWAPEAAATEGMLLSTFDYAWNTCSNGERRHLELQKLGDPEFMSKRKSQVLVPSIRDQVVTIKVEKSNYTFLTSTLKVMRPFG.

The GIY-YIG domain maps to R103 to G152.

Its subcellular location is the cytoplasm. This Arabidopsis thaliana (Mouse-ear cress) protein is Protein EFFECTOR OF TRANSCRIPTION 3.